A 348-amino-acid chain; its full sequence is Phosphate acyltransferase (348 aa).

This sequence belongs to the PlsX family. In terms of assembly, homodimer. Probably interacts with PlsY.

The protein localises to the cytoplasm. It carries out the reaction a fatty acyl-[ACP] + phosphate = an acyl phosphate + holo-[ACP]. It participates in lipid metabolism; phospholipid metabolism. Catalyzes the reversible formation of acyl-phosphate (acyl-PO(4)) from acyl-[acyl-carrier-protein] (acyl-ACP). This enzyme utilizes acyl-ACP as fatty acyl donor, but not acyl-CoA. This chain is Phosphate acyltransferase, found in Francisella philomiragia subsp. philomiragia (strain ATCC 25017 / CCUG 19701 / FSC 153 / O#319-036).